The sequence spans 349 residues: Thiamine thiazole synthase, chloroplastic (349 aa).

A chloroplast-targeting transit peptide spans 1–45 (MAAIASTLSLSSTKPQRLFDSSFHGSAISAAPISIGLKPRSFSVR). Substrate contacts are provided by residues Ala-94, 114 to 115 (EQ), Gly-122, and Ala-187. Cys-216 bears the 2,3-didehydroalanine (Cys) mark. Residues Asp-218, His-233, Met-285, and 295–297 (RMG) each bind substrate.

Belongs to the THI4 family. Homooctamer. Interacts with RBCX1 and RBCX1. Interacts with CPK33. The cofactor is Fe cation. In terms of processing, during the catalytic reaction, a sulfide is transferred from Cys-216 to a reaction intermediate, generating a dehydroalanine residue. Not phosphorylated in vitro by CPK33. Expressed at high levels in chloroplast-containing parenchymatic cells of leaves, inflorescence shoots and flowers, and at lower levels in the vascular system. In young plants, detected in roots and shoots including cotyledons, leaves and hypocotyls. Also observed in apical meristematic regions, siliques and embryos. Low expression in roots, limited to the vascular tissue. Broadly expressed in roots, cotyledons, leaves, hypocotyls, inflorescences, siliques, and strongly in guard cells.

The protein localises to the plastid. Its subcellular location is the chloroplast. The protein resides in the mitochondrion. It is found in the cell membrane. The catalysed reaction is [ADP-thiazole synthase]-L-cysteine + glycine + NAD(+) = [ADP-thiazole synthase]-dehydroalanine + ADP-5-ethyl-4-methylthiazole-2-carboxylate + nicotinamide + 3 H2O + 2 H(+). Functionally, involved in biosynthesis of the thiamine precursor thiazole. Catalyzes the conversion of NAD and glycine to adenosine diphosphate 5-(2-hydroxyethyl)-4-methylthiazole-2-carboxylic acid (ADT), an adenylated thiazole intermediate. The reaction includes an iron-dependent sulfide transfer from a conserved cysteine residue of the protein to a thiazole intermediate. The enzyme can only undergo a single turnover, which suggests it is a suicide enzyme. May have additional roles in adaptation to various stress conditions and in DNA damage tolerance. Acts as a positive regulator for the abscisic acid-induced activation of slow type anion channels during stomatal closure by repressing CPK33 kinase activity. The protein is Thiamine thiazole synthase, chloroplastic of Arabidopsis thaliana (Mouse-ear cress).